A 130-amino-acid chain; its full sequence is MTTSSYFLLVALGLLLYVRQSFSTHEHTCQLDDPAHPQGKCGSDLVNYHEEKCEEEEARRGGTNDGGKKRRRASPLRKRRRFISMLKARAKRRGYQGIACECCQHYCTDQEFINYCPPVTESSSSSSSAV.

An N-terminal signal peptide occupies residues methionine 1–serine 23. 4 cysteine pairs are disulfide-bonded: cysteine 29–cysteine 100, cysteine 41–cysteine 103, cysteine 53–cysteine 116, and cysteine 102–cysteine 107. Proline 34 bears the 4-hydroxyproline; partial mark. The interval glutamate 54–arginine 77 is disordered. Positions arginine 59–arginine 92 are cleaved as a propeptide — c peptide. Basic residues predominate over residues lysine 68 to arginine 77. 4-carboxyglutamate; partial is present on glutamate 111.

This sequence belongs to the insulin family. Heterodimer of A and B chains; disulfide-linked. Expressed by the venom gland.

The protein resides in the secreted. This venom insulin, from a fish-hunting cone snail, facilitates prey capture by rapidly inducing hypoglycemic shock. Intraperitoneal injection of this peptide into zebrafish lowers blood glucose with the same potency than human insulin. In vivo, when applied to water, this peptide reduces overall locomotor activity of zebrafish larvae, observed as a significant decrease in the percentage of time spent swimming and movement frequency. The protein is Con-Ins G2b of Conus geographus (Geography cone).